The chain runs to 237 residues: Lectin alpha chain (237 aa).

Residues E8 and D10 each coordinate Mn(2+). Residues D10, Y12, N14, and D19 each coordinate Ca(2+). An a carbohydrate-binding site is contributed by Y12. Mn(2+) is bound by residues D19, H24, and S34. 99–100 (LY) provides a ligand contact to a carbohydrate. D208 contributes to the Ca(2+) binding site. R228 is a binding site for a carbohydrate.

This sequence belongs to the leguminous lectin family. In terms of assembly, equilibrium between homodimer and homotetramer. Oligomerization is pH-dependent with homotetramers forming at pH 6.5 and above. The beta and gamma chains are produced by partial proteolytic processing of the lectin alpha chain by an asparaginyl endopeptidase. Mixture of 60% alpha lectin and 40% of its beta and gamma proteolytic fragments. In terms of tissue distribution, seed.

Its subcellular location is the vacuole. The protein resides in the aleurone grain. Its function is as follows. D-mannose/D-glucose-binding lectin. Induces histamine release in mast cells from hamster and rat. Induces lymphocyte proliferation and IFNG production. The chain is Lectin alpha chain from Macropsychanthus bicolor (Dioclea rostrata).